The chain runs to 287 residues: Merozoite surface protein 2 (287 aa).

Residues 1–20 (MKVIKTLSIINFFIFVTFNI) form the signal peptide. N-linked (GlcNAc...) asparagine glycans are attached at residues asparagine 22 and asparagine 36. The disordered stretch occupies residues 42–248 (SMTESNPPTG…DSQKECTDGN (207 aa)). Residues 44–213 (TESNPPTGAS…EQTESPELQS (170 aa)) are polymorphic region. The segment covering 54–112 (GSAGGSAGGSAGGSAGGSAGGSAGGSAGGSAGGSAGGSAGGSAGGSAGGSAGSGDGNGA) has biased composition (gly residues). 12 consecutive repeat copies span residues 55-58 (SAGG), 59-62 (SAGG), 63-66 (SAGG), 67-70 (SAGG), 71-74 (SAGG), 75-78 (SAGG), 79-82 (SAGG), 83-86 (SAGG), 87-90 (SAGG), 91-94 (SAGG), 95-98 (SAGG), and 99-102 (SAGG). The 12 X 4 AA tandem repeats of S-A-G-G stretch occupies residues 55 to 102 (SAGGSAGGSAGGSAGGSAGGSAGGSAGGSAGGSAGGSAGGSAGGSAGG). The segment covering 121–149 (SPSTPATTTTTTTTNDAEASTSTSSENPN) has biased composition (low complexity). Polar residues-rich tracts occupy residues 150–180 (HNNAETNQANKETQNNSNVQQDSQTKSNVPP) and 187–215 (KSPTAQPEQAENSAPTAEQTESPELQSAP). Asparagine 164 carries N-linked (GlcNAc...) asparagine glycosylation. N-linked (GlcNAc...) asparagine glycosylation is present at asparagine 236. Cysteines 244 and 252 form a disulfide. 2 N-linked (GlcNAc...) asparagine glycosylation sites follow: asparagine 260 and asparagine 261. Residue asparagine 261 is the site of GPI-anchor amidated asparagine attachment. A propeptide spans 262 to 287 (SSNIASINKFVVLISATLVLSFAIFI) (removed in mature form).

It is found in the cell membrane. Its function is as follows. May play a role in the merozoite attachment to the erythrocyte. The protein is Merozoite surface protein 2 of Plasmodium falciparum (isolate FCR-3 / Gambia).